The chain runs to 685 residues: Protein SPT2 homolog (685 aa).

Positions 1-570 (MDFREILMIA…PPLSGYRAAQ (570 aa)) are important for interaction with DNA. Lysine 37 is covalently cross-linked (Glycyl lysine isopeptide (Lys-Gly) (interchain with G-Cter in SUMO2)). Positions 45–81 (QAFLKRKEEELRRKALEEKRRKEELVKKRIELKHDKK) form a coiled coil. Residues 79 to 168 (DKKARAMAKR…PLKSAPPPMN (90 aa)) are disordered. Basic and acidic residues predominate over residues 101-111 (IEEKSKKRQAT). Residues 123–148 (YEMEEENEFLEYNHAESEQEYEEEQE) are a coiled coil. Lysine 187 is covalently cross-linked (Glycyl lysine isopeptide (Lys-Gly) (interchain with G-Cter in SUMO2)). 2 stretches are compositionally biased toward basic and acidic residues: residues 188–209 (VVKK…EFLE) and 260–275 (HAEK…EKHL). Disordered regions lie at residues 188 to 615 (VVKK…QEEI) and 644 to 685 (SWKE…LKRR). A Phosphoserine modification is found at serine 278. Low complexity-rich tracts occupy residues 317–330 (SSTS…TSAS), 365–385 (SPGV…PSTG), and 402–415 (GSSS…ISGS). The span at 416 to 431 (KKPTNDSNPSRRTVSG) shows a compositional bias: polar residues. The span at 435-501 (PGQPASSSGG…PGRSISGSIP (67 aa)) shows a compositional bias: low complexity. The residue at position 471 (serine 471) is a Phosphoserine. A compositionally biased stretch (polar residues) spans 519-529 (GPGQTVSSSGP). The span at 542 to 553 (ISSKNIISRSSN) shows a compositional bias: low complexity. The interval 571 to 685 (GPQRLPFPTG…RRRAKKLKRR (115 aa)) is important for interaction with histones. Position 582 is an N6-acetyllysine (lysine 582). Residues 587–613 (YEEEDDDDDEYDSEMEDFIEDEGEPQE) show a composition bias toward acidic residues. The residue at position 599 (serine 599) is a Phosphoserine. 2 stretches are compositionally biased toward basic and acidic residues: residues 644-655 (SWKEQQKEEAKS) and 666-676 (EMRREEEEMQR). Residues 645–685 (WKEQQKEEAKSLRLGMQEDLEEMRREEEEMQRRRAKKLKRR) are a coiled coil.

The protein belongs to the SPT2 family. As to quaternary structure, interacts with histones. Interacts with a heterotetrameric complex formed by histone H3 and H4, especially when the histone tetramer is not bound to DNA. Interacts with histone H3.3.

Its subcellular location is the nucleus. It localises to the nucleolus. Functionally, histone chaperone that stabilizes pre-existing histone tetramers and regulates replication-independent histone exchange on chromatin. Required for normal chromatin refolding in the coding region of transcribed genes, and for the suppression of spurious transcription. Binds DNA and histones and promotes nucleosome assembly (in vitro). Facilitates formation of tetrameric histone complexes containing histone H3 and H4. Modulates RNA polymerase 1-mediated transcription. Binds DNA, with a preference for branched DNA species, such as Y-form DNA and Holliday junction DNA. The sequence is that of Protein SPT2 homolog (SPTY2D1) from Homo sapiens (Human).